A 168-amino-acid polypeptide reads, in one-letter code: Crossover junction endodeoxyribonuclease RuvC (168 aa).

Active-site residues include Asp-9, Glu-70, and Asp-145. The Mg(2+) site is built by Asp-9, Glu-70, and Asp-145.

This sequence belongs to the RuvC family. Homodimer which binds Holliday junction (HJ) DNA. The HJ becomes 2-fold symmetrical on binding to RuvC with unstacked arms; it has a different conformation from HJ DNA in complex with RuvA. In the full resolvosome a probable DNA-RuvA(4)-RuvB(12)-RuvC(2) complex forms which resolves the HJ. It depends on Mg(2+) as a cofactor.

It is found in the cytoplasm. It carries out the reaction Endonucleolytic cleavage at a junction such as a reciprocal single-stranded crossover between two homologous DNA duplexes (Holliday junction).. Its function is as follows. The RuvA-RuvB-RuvC complex processes Holliday junction (HJ) DNA during genetic recombination and DNA repair. Endonuclease that resolves HJ intermediates. Cleaves cruciform DNA by making single-stranded nicks across the HJ at symmetrical positions within the homologous arms, yielding a 5'-phosphate and a 3'-hydroxyl group; requires a central core of homology in the junction. The consensus cleavage sequence is 5'-(A/T)TT(C/G)-3'. Cleavage occurs on the 3'-side of the TT dinucleotide at the point of strand exchange. HJ branch migration catalyzed by RuvA-RuvB allows RuvC to scan DNA until it finds its consensus sequence, where it cleaves and resolves the cruciform DNA. In Chlamydia pneumoniae (Chlamydophila pneumoniae), this protein is Crossover junction endodeoxyribonuclease RuvC.